We begin with the raw amino-acid sequence, 1387 residues long: DNA-directed RNA polymerase subunit beta'' (1387 aa).

Zn(2+) contacts are provided by cysteine 224, cysteine 295, cysteine 302, and cysteine 305.

This sequence belongs to the RNA polymerase beta' chain family. RpoC2 subfamily. As to quaternary structure, in plastids the minimal PEP RNA polymerase catalytic core is composed of four subunits: alpha, beta, beta', and beta''. When a (nuclear-encoded) sigma factor is associated with the core the holoenzyme is formed, which can initiate transcription. Zn(2+) serves as cofactor.

The protein resides in the plastid. It localises to the chloroplast. It carries out the reaction RNA(n) + a ribonucleoside 5'-triphosphate = RNA(n+1) + diphosphate. In terms of biological role, DNA-dependent RNA polymerase catalyzes the transcription of DNA into RNA using the four ribonucleoside triphosphates as substrates. The polypeptide is DNA-directed RNA polymerase subunit beta'' (Panax ginseng (Korean ginseng)).